We begin with the raw amino-acid sequence, 138 residues long: uncharacterized protein (138 aa).

Residues 84-104 (PPKKTSPATSSSLKPRPGPRG) form a disordered region. Residues 85-98 (PKKTSPATSSSLKP) show a composition bias toward low complexity.

This sequence to M.pneumoniae MPN_413 and MPN_463.

This is an uncharacterized protein from Mycoplasma pneumoniae (strain ATCC 29342 / M129 / Subtype 1) (Mycoplasmoides pneumoniae).